Here is a 314-residue protein sequence, read N- to C-terminus: Aspartate carbamoyltransferase catalytic subunit (314 aa).

Carbamoyl phosphate contacts are provided by arginine 55 and threonine 56. Residue lysine 83 participates in L-aspartate binding. Positions 105, 139, and 142 each coordinate carbamoyl phosphate. Residues arginine 172 and arginine 226 each contribute to the L-aspartate site. The carbamoyl phosphate site is built by glycine 267 and proline 268.

It belongs to the aspartate/ornithine carbamoyltransferase superfamily. ATCase family. In terms of assembly, heterododecamer (2C3:3R2) of six catalytic PyrB chains organized as two trimers (C3), and six regulatory PyrI chains organized as three dimers (R2).

The enzyme catalyses carbamoyl phosphate + L-aspartate = N-carbamoyl-L-aspartate + phosphate + H(+). It participates in pyrimidine metabolism; UMP biosynthesis via de novo pathway; (S)-dihydroorotate from bicarbonate: step 2/3. Functionally, catalyzes the condensation of carbamoyl phosphate and aspartate to form carbamoyl aspartate and inorganic phosphate, the committed step in the de novo pyrimidine nucleotide biosynthesis pathway. The chain is Aspartate carbamoyltransferase catalytic subunit from Rhodococcus jostii (strain RHA1).